The following is a 328-amino-acid chain: Ketol-acid reductoisomerase (NADP(+)) (328 aa).

Positions 2 to 182 (AKIYTDREAS…GATRAGVIET (181 aa)) constitute a KARI N-terminal Rossmann domain. Residues 25–28 (YGIQ), Arg48, Ser53, and 83–86 (DMEQ) each bind NADP(+). Residue His108 is part of the active site. Gly134 contacts NADP(+). In terms of domain architecture, KARI C-terminal knotted spans 183-328 (TFAEETETDL…EEMRKLLFGP (146 aa)). Mg(2+) is bound by residues Asp191, Glu195, Glu227, and Glu231. Ser252 serves as a coordination point for substrate.

Belongs to the ketol-acid reductoisomerase family. Mg(2+) is required as a cofactor.

The catalysed reaction is (2R)-2,3-dihydroxy-3-methylbutanoate + NADP(+) = (2S)-2-acetolactate + NADPH + H(+). The enzyme catalyses (2R,3R)-2,3-dihydroxy-3-methylpentanoate + NADP(+) = (S)-2-ethyl-2-hydroxy-3-oxobutanoate + NADPH + H(+). The protein operates within amino-acid biosynthesis; L-isoleucine biosynthesis; L-isoleucine from 2-oxobutanoate: step 2/4. It participates in amino-acid biosynthesis; L-valine biosynthesis; L-valine from pyruvate: step 2/4. Its function is as follows. Involved in the biosynthesis of branched-chain amino acids (BCAA). Catalyzes an alkyl-migration followed by a ketol-acid reduction of (S)-2-acetolactate (S2AL) to yield (R)-2,3-dihydroxy-isovalerate. In the isomerase reaction, S2AL is rearranged via a Mg-dependent methyl migration to produce 3-hydroxy-3-methyl-2-ketobutyrate (HMKB). In the reductase reaction, this 2-ketoacid undergoes a metal-dependent reduction by NADPH to yield (R)-2,3-dihydroxy-isovalerate. The protein is Ketol-acid reductoisomerase (NADP(+)) of Pyrobaculum aerophilum (strain ATCC 51768 / DSM 7523 / JCM 9630 / CIP 104966 / NBRC 100827 / IM2).